A 253-amino-acid polypeptide reads, in one-letter code: uncharacterized protein (253 aa).

Ile10–Ala35 is an NADP(+) binding site. Residue Ser144 coordinates substrate. The active-site Proton acceptor is the Tyr159.

This sequence belongs to the short-chain dehydrogenases/reductases (SDR) family.

This is an uncharacterized protein from Sinorhizobium fredii (strain NBRC 101917 / NGR234).